Reading from the N-terminus, the 520-residue chain is 5'-nucleotidase domain-containing protein 2 (520 aa).

Asp-73 (nucleophile) is an active-site residue. The Mg(2+) site is built by Asp-73, Asp-75, and Asp-358. The active-site Proton donor is Asp-75.

Belongs to the 5'(3')-deoxyribonucleotidase family. Interacts with tyrosine 3-monooxygenase TH; the interaction results in reduced phosphorylation and decreased catalytic activity of TH.

Its subcellular location is the cytoplasm. Promotes dephosphorylation of tyrosine 3-monooxygenase TH which decreases TH catalytic activity and leads to reduced synthesis of catecholamines including dopamine, noradrenaline and adrenaline. The exact mechanism of activity is unknown but may act as a phosphatase or promote the activity of phosphatases or may inhibit phosphorylation by acting as a barrier to interfere with protein kinase access. This is 5'-nucleotidase domain-containing protein 2 (NT5DC2) from Homo sapiens (Human).